Here is a 161-residue protein sequence, read N- to C-terminus: Photosystem II extrinsic protein V (161 aa).

An N-terminal signal peptide occupies residues 1 to 25; that stretch reads MKKFFISVVFIVLLTFTTFINSATA. Residues C61, C64, H65, and H116 each contribute to the heme c site.

The protein belongs to the cytochrome c family. PsbV subfamily. As to quaternary structure, PSII is composed of 1 copy each of membrane proteins PsbA, PsbB, PsbC, PsbD, PsbE, PsbF, PsbH, PsbI, PsbJ, PsbK, PsbL, PsbM, PsbT, PsbX, PsbY, PsbZ, Psb30/Ycf12, peripheral proteins PsbO, CyanoQ (PsbQ), PsbU, PsbV and a large number of cofactors. It forms dimeric complexes. It depends on heme c as a cofactor.

It localises to the cellular thylakoid membrane. Its function is as follows. One of the extrinsic, lumenal subunits of photosystem II (PSII). PSII is a light-driven water plastoquinone oxidoreductase, using light energy to abstract electrons from H(2)O, generating a proton gradient subsequently used for ATP formation. The extrinsic proteins stabilize the structure of photosystem II oxygen-evolving complex (OEC), the ion environment of oxygen evolution and protect the OEC against heat-induced inactivation. Low-potential cytochrome c that plays a role in the OEC of PSII. This chain is Photosystem II extrinsic protein V, found in Trichodesmium erythraeum (strain IMS101).